We begin with the raw amino-acid sequence, 95 residues long: Cell division protein FtsB (95 aa).

Residues 1-3 are Cytoplasmic-facing; it reads MRW. Residues 4–21 form a helical membrane-spanning segment; sequence VLAGLTALLLWLQGLLWF. Over 22–95 the chain is Periplasmic; that stretch reads GEGGLNDVRG…QIIEREDDAR (74 aa). Residues 26-76 are a coiled coil; the sequence is LNDVRGLSRSVEAQREEVDRLRQRNQALEAEVNDLKTGLEALEERARSELG.

Belongs to the FtsB family. Part of a complex composed of FtsB, FtsL and FtsQ.

Its subcellular location is the cell inner membrane. Essential cell division protein. May link together the upstream cell division proteins, which are predominantly cytoplasmic, with the downstream cell division proteins, which are predominantly periplasmic. The sequence is that of Cell division protein FtsB from Alkalilimnicola ehrlichii (strain ATCC BAA-1101 / DSM 17681 / MLHE-1).